Consider the following 175-residue polypeptide: Interleukin-10 (175 aa).

A signal peptide spans 1-18 (MPSSALLYCLIFLAGVAA). 2 cysteine pairs are disulfide-bonded: Cys-26-Cys-122 and Cys-76-Cys-128. Asn-130 carries an N-linked (GlcNAc...) asparagine glycan.

Belongs to the IL-10 family. In terms of assembly, homodimer. Interacts with IL10RA and IL10RB.

The protein localises to the secreted. In terms of biological role, major immune regulatory cytokine that acts on many cells of the immune system where it has profound anti-inflammatory functions, limiting excessive tissue disruption caused by inflammation. Mechanistically, IL10 binds to its heterotetrameric receptor comprising IL10RA and IL10RB leading to JAK1 and STAT2-mediated phosphorylation of STAT3. In turn, STAT3 translocates to the nucleus where it drives expression of anti-inflammatory mediators. Targets antigen-presenting cells (APCs) such as macrophages and monocytes and inhibits their release of pro-inflammatory cytokines including granulocyte-macrophage colony-stimulating factor /GM-CSF, granulocyte colony-stimulating factor/G-CSF, IL-1 alpha, IL-1 beta, IL-6, IL-8 and TNF-alpha. Also interferes with antigen presentation by reducing the expression of MHC-class II and co-stimulatory molecules, thereby inhibiting their ability to induce T cell activation. In addition, controls the inflammatory response of macrophages by reprogramming essential metabolic pathways including mTOR signaling. The protein is Interleukin-10 (IL10) of Sus scrofa (Pig).